Consider the following 101-residue polypeptide: Small ribosomal subunit protein uS14 (101 aa).

Belongs to the universal ribosomal protein uS14 family. As to quaternary structure, part of the 30S ribosomal subunit. Contacts proteins S3 and S10.

Its function is as follows. Binds 16S rRNA, required for the assembly of 30S particles and may also be responsible for determining the conformation of the 16S rRNA at the A site. The chain is Small ribosomal subunit protein uS14 from Salmonella schwarzengrund (strain CVM19633).